Reading from the N-terminus, the 294-residue chain is ATP synthase gamma chain (294 aa).

The protein belongs to the ATPase gamma chain family. In terms of assembly, F-type ATPases have 2 components, CF(1) - the catalytic core - and CF(0) - the membrane proton channel. CF(1) has five subunits: alpha(3), beta(3), gamma(1), delta(1), epsilon(1). CF(0) has three main subunits: a, b and c.

It localises to the cell inner membrane. In terms of biological role, produces ATP from ADP in the presence of a proton gradient across the membrane. The gamma chain is believed to be important in regulating ATPase activity and the flow of protons through the CF(0) complex. In Rhizobium johnstonii (strain DSM 114642 / LMG 32736 / 3841) (Rhizobium leguminosarum bv. viciae), this protein is ATP synthase gamma chain.